We begin with the raw amino-acid sequence, 582 residues long: ATP-dependent lipid A-core flippase (582 aa).

Helical transmembrane passes span 25 to 45 (WFMLVISVIGYALYAGAQAGA), 64 to 84 (VLIVSIAPLVLVLFQGLGQFM), 142 to 162 (AIIVIIREGLTVIGLFSFLLW), 165 to 185 (WKLTLILVTVVPLIALVMNIT), and 253 to 273 (VIVQLFVAVGIGFITYLYIHL). The ABC transmembrane type-1 domain occupies 29 to 309 (VISVIGYALY…LTDVNVKVQR (281 aa)). An ABC transporter domain is found at 342–577 (IDFEGVSFGY…NGLYTQMYRM (236 aa)). 375-382 (GRSGAGKS) lines the ATP pocket.

It belongs to the ABC transporter superfamily. Lipid exporter (TC 3.A.1.106) family. As to quaternary structure, homodimer.

The protein resides in the cell inner membrane. It carries out the reaction ATP + H2O + lipid A-core oligosaccharideSide 1 = ADP + phosphate + lipid A-core oligosaccharideSide 2.. Functionally, involved in lipopolysaccharide (LPS) biosynthesis. Translocates lipid A-core from the inner to the outer leaflet of the inner membrane. Transmembrane domains (TMD) form a pore in the inner membrane and the ATP-binding domain (NBD) is responsible for energy generation. This Alcanivorax borkumensis (strain ATCC 700651 / DSM 11573 / NCIMB 13689 / SK2) protein is ATP-dependent lipid A-core flippase.